The chain runs to 788 residues: Cyclin-F (788 aa).

Residues 20 to 28 carry the Nuclear localization signal 1 motif; the sequence is KRRIRRRPR. Residues 29–76 enclose the F-box domain; that stretch reads NLTILNLPEDALFHILKWLSVGDILAVRAVHSHLKYLVDNHASVWACA. Positions 291 to 405 constitute a Cyclin N-terminal domain; sequence HAVNKQRVFS…EVVSALDGKI (115 aa). 4 short sequence motifs (d box) span residues 310–313, 343–346, 349–352, and 351–354; these read RYIL, RRRL, RYRL, and RLQL. 2 disordered regions span residues 566–585 and 700–788; these read SARRTKRKRENSLQEDRGSF and TSGY…FLKL. Positions 568–574 match the Nuclear localization signal 2 motif; sequence RRTKRKR. The segment at 582 to 766 is PEST; that stretch reads RGSFVTTPTA…ESCAPQQQVK (185 aa). Composition is skewed to polar residues over residues 700-716 and 723-738; these read TSGYSSVNSASPTDSGR and RSTSELPTGSSLNTQP. The D box 5 signature appears at 767-770; it reads RKNL.

The protein belongs to the cyclin family. Cyclin AB subfamily. As to quaternary structure, component of the SCF(CCNF) complex consisting of CUL1, RBX1, SKP1 and CCNF. Interacts with SKP1. Interacts with CUL1. Interacts with CCNB1; interaction is required for nuclear localization of CCNB1. Interacts with CCP110; this interaction leads to CCP110 ubiquitination and degradation via the proteasome pathway. Interacts (via the Cyclin N-terminal domain) with MYBL2/BMYB. Interacts with FZR1/CDH1 (via N-terminus). Interacts with RRM2 (via Cy motif and when phosphorylated at 'Thr-33'); the interaction occurs exclusively in G2 and early M. Interacts with CDC6 (via Cy motif); the interaction takes place during G2 and M phase. Degraded when the spindle assembly checkpoint is activated during the G2-M transition. Degradation is not dependent on the proteasome or ubiquitin and depends on the C-terminal PEST sequence. In terms of processing, phosphorylated just before cells enter into mitosis. Post-translationally, ubiquitinated by the anaphase-promoting complex (APC/C); leading to its degradation by the proteasome.

The protein resides in the nucleus. It localises to the cytoplasm. The protein localises to the perinuclear region. Its subcellular location is the cytoskeleton. It is found in the microtubule organizing center. The protein resides in the centrosome. It localises to the centriole. Functionally, substrate recognition component of a SCF (SKP1-CUL1-F-box protein) E3 ubiquitin-protein ligase complex which mediates the ubiquitination and subsequent proteasomal degradation of target proteins. The SCF(CCNF) E3 ubiquitin-protein ligase complex is an integral component of the ubiquitin proteasome system (UPS) and links proteasome degradation to the cell cycle. Mediates the substrate recognition and the proteasomal degradation of various target proteins involved in the regulation of cell cycle progression and in the maintenance of genome stability. Mediates the ubiquitination and subsequent proteasomal degradation of CP110 during G2 phase, thereby acting as an inhibitor of centrosome reduplication. In G2, mediates the ubiquitination and proteasomal degradation of CDC6, thereby suppressing DNA re-replication and preventing genome instability. Involved in the ubiquitination and degradation of the substrate adapter CDH1 of the anaphase-promoting complex (APC/C), thereby acting as an antagonist of APC/C in regulating G1 progression and S phase entry. May play a role in the G2 cell cycle checkpoint control after DNA damage, possibly by promoting the ubiquitination of MYBL2/BMYB. This chain is Cyclin-F (CCNF), found in Bos taurus (Bovine).